The sequence spans 340 residues: MRPYPIHCVSIVIPVYNEEDSLPELLRRTEAACKQLRHDYEIVLVDDGSRDASAQLLEEAASVVDSPFVAVILNRNYGQHAAIMAGFEQCKGDVVITLDADLQNPPEEIPRLVAEAEKGFDVVGTVRGNRQDSALRRYPSKLINLAVQRSTGVAMSDYGCMLRAYRRTIIDAMLACRERSTFIPILANSFARHTTEIPVAHAEREHGDSKYSPMRLINLMFDLITCMTTTPLRLLSIVGFAMAGLGVLFAAALIFMRLAFGAGWAGDGLFVLFAVLFVFTGGQFIGMGLLGEYLGRMYSDVRARPRFFIEKVLRGHPATPAPAITVDGLTSNSTSDQVLS.

Transmembrane regions (helical) follow at residues 235–255 (LSIVGFAMAGLGVLFAAALIF) and 269–289 (LFVLFAVLFVFTGGQFIGMGL).

The protein belongs to the glycosyltransferase 2 family.

The protein localises to the cell inner membrane. It carries out the reaction UDP-4-deoxy-4-formamido-beta-L-arabinose + di-trans,octa-cis-undecaprenyl phosphate = 4-deoxy-4-formamido-alpha-L-arabinopyranosyl di-trans,octa-cis-undecaprenyl phosphate + UDP. It functions in the pathway glycolipid biosynthesis; 4-amino-4-deoxy-alpha-L-arabinose undecaprenyl phosphate biosynthesis; 4-amino-4-deoxy-alpha-L-arabinose undecaprenyl phosphate from UDP-4-deoxy-4-formamido-beta-L-arabinose and undecaprenyl phosphate: step 1/2. The protein operates within bacterial outer membrane biogenesis; lipopolysaccharide biosynthesis. In terms of biological role, catalyzes the transfer of 4-deoxy-4-formamido-L-arabinose from UDP to undecaprenyl phosphate. The modified arabinose is attached to lipid A and is required for resistance to polymyxin and cationic antimicrobial peptides. The sequence is that of Undecaprenyl-phosphate 4-deoxy-4-formamido-L-arabinose transferase from Pseudomonas fluorescens (strain Pf0-1).